A 2155-amino-acid chain; its full sequence is Conidial pigment polyketide synthase PfmaE (2155 aa).

Positions 8–245 (LLFGDQSLDT…TAIPVYGPYH (238 aa)) are N-terminal acylcarrier protein transacylase domain (SAT). The 433-residue stretch at 381–813 (KCKLAIVGMA…GGNTGLLLED (433 aa)) folds into the Ketosynthase family 3 (KS3) domain. Catalysis depends on for beta-ketoacyl synthase activity residues Cys-553, His-688, and His-731. Positions 910–1231 (AFMFTGQGSH…LCTLHSAGLN (322 aa)) are malonyl-CoA:ACP transacylase (MAT) domain. The For acyl/malonyl transferase activity role is filled by Ser-1001. The product template (PT) domain stretch occupies residues 1293–1608 (TTTVQKVVRE…PRKVLNVVLP (316 aa)). Residues 1297-1428 (QKVVREEVKG…CKVFFGDNEE (132 aa)) form an N-terminal hotdog fold region. Residues 1297–1604 (QKVVREEVKG…FQAIPRKVLN (308 aa)) form the PKS/mFAS DH domain. His-1329 acts as the Proton acceptor; for dehydratase activity in catalysis. The C-terminal hotdog fold stretch occupies residues 1455 to 1604 (DASKIGRGLA…FQAIPRKVLN (150 aa)). The active-site Proton donor; for dehydratase activity is the Asp-1516. 2 consecutive Carrier domains span residues 1653–1730 (LTKN…AQFE) and 1779–1856 (GNVS…GIED). O-(pantetheine 4'-phosphoryl)serine is present on Ser-1690. The segment at 1738-1782 (EENAHSSASSDSADMETESNFTTPSDDSEKDEVKGDAPAADGNVS) is disordered. An O-(pantetheine 4'-phosphoryl)serine modification is found at Ser-1816. Residues 1855-1892 (EDKPKRAAPKSAKQEPAKPEPKVQGEAKAHTNPVDNYP) are disordered. A compositionally biased stretch (basic and acidic residues) spans 1866-1883 (AKQEPAKPEPKVQGEAKA). The interval 1911–2041 (QLFMIPDGSG…LGEGDDAEAK (131 aa)) is thioesterase (TE) domain.

Its pathway is pigment biosynthesis; melanin biosynthesis. Functionally, non-reducing polyketide synthase; part of the gene cluster that mediates the biosynthesis of dihydroxynaphthalene (DHN)-melanin, a bluish-green pigment forming a dark layer in the conidial wall that protects the conidia from UV radiations. The first step of the pathway is the production of the pentaketide 1,3,6,8-tetrahydroxynaphthalene (1,3,6,8-THN or T4HN) by the polyketide synthase PfmaE though condensation of acetyl-CoA with malonyl-CoA. T4HN is not stable and easily oxidizes into the stable form flaviolin. T4HN is also substrate of the hydroxynaphthalene reductase PfmaG to yield scytalone. The scytalone dehydratase PfmaJ then reduces scytalone to 1,3,8-THN. 1,3,8-THN is then substrate of the hydroxynaphthalene reductase PfmaI to yield vermelone. Vermelone is further converted by the multicopper oxidase PfmaD to 1,8-DHN. Finally the laccase PFICI_06862 transforms 1,8-DHN to DHN-melanin. The roles of the 5-oxoprolinase PfmaA and the proline iminopeptidase PfmaB within the cluster have not been elucidated yet. The chain is Conidial pigment polyketide synthase PfmaE from Pestalotiopsis fici (strain W106-1 / CGMCC3.15140).